A 207-amino-acid polypeptide reads, in one-letter code: Small ribosomal subunit protein uS4 (207 aa).

The tract at residues 33-54 is disordered; that stretch reads KLDSKPGQHGRTSGARTSDYGN. Residues 42–53 show a composition bias toward polar residues; sequence GRTSGARTSDYG. Positions 97-160 constitute an S4 RNA-binding domain; it reads SRLDNVVYRM…KKQVRIAEAL (64 aa).

This sequence belongs to the universal ribosomal protein uS4 family. In terms of assembly, part of the 30S ribosomal subunit. Contacts protein S5. The interaction surface between S4 and S5 is involved in control of translational fidelity.

Functionally, one of the primary rRNA binding proteins, it binds directly to 16S rRNA where it nucleates assembly of the body of the 30S subunit. Its function is as follows. With S5 and S12 plays an important role in translational accuracy. This Cupriavidus necator (strain ATCC 17699 / DSM 428 / KCTC 22496 / NCIMB 10442 / H16 / Stanier 337) (Ralstonia eutropha) protein is Small ribosomal subunit protein uS4.